Here is a 155-residue protein sequence, read N- to C-terminus: Small ribosomal subunit protein uS7c (155 aa).

Belongs to the universal ribosomal protein uS7 family. As to quaternary structure, part of the 30S ribosomal subunit.

Its subcellular location is the plastid. In terms of biological role, one of the primary rRNA binding proteins, it binds directly to 16S rRNA where it nucleates assembly of the head domain of the 30S subunit. In Lathraea clandestina (Purple toothwort), this protein is Small ribosomal subunit protein uS7c (rps7).